Reading from the N-terminus, the 200-residue chain is Intraflagellar transport protein 43 homolog (200 aa).

2 disordered regions span residues 56–76 (KTGKSQRKTDDDDSQETIAAP) and 175–200 (ERIDAKDQPSDSRSRNARETLISSKY). A compositionally biased stretch (basic and acidic residues) spans 175–192 (ERIDAKDQPSDSRSRNAR).

The protein belongs to the IFT43 family. Component of the IFT complex A (IFT-A) composed of at least che-11, daf-10, dyf-2, ift-139, ift-43 and ifta-1. In terms of tissue distribution, expressed in ciliated sensory neurons.

It is found in the cell projection. Its subcellular location is the cilium. In terms of biological role, as a component of IFT complex A (IFT-A), a complex required for retrograde ciliary transport and entry into cilia of G protein-coupled receptors (GPCRs), it is involved in ciliogenesis. In particular, may act redundantly with the intraflagellar transport protein ift-139 to regulate the transport of specific ciliary cargo proteins such as che-3 which are related to motility. The protein is Intraflagellar transport protein 43 homolog of Caenorhabditis elegans.